The following is a 1180-amino-acid chain: Pyruvate carboxylase 2 (1180 aa).

Position 2 is an N-acetylserine (serine 2). Positions 19 to 471 constitute a Biotin carboxylation domain; the sequence is EKNKILVANR…WTTFIDDTPQ (453 aa). Lysine 137, glutamate 221, and histidine 256 together coordinate ATP. Residues 141 to 338 enclose the ATP-grasp domain; sequence RHLAARANVP…IVSAQIQIAA (198 aa). Arginine 313 is an active-site residue. Residues 558–825 form the Pyruvate carboxyltransferase domain; it reads TLLMDTTWRD…DTGINVEHVR (268 aa). Substrate-binding positions include 566–570 and arginine 639; that span reads RDAHQ. Position 567 (aspartate 567) interacts with a divalent metal cation. Positions 735, 765, and 767 each coordinate a divalent metal cation. The residue at position 735 (lysine 735) is an N6-carboxylysine. Substrate is bound at residue threonine 899. One can recognise a Biotinyl-binding domain in the interval 1095 to 1170; sequence KADVHDTHQI…DASDLLVVLE (76 aa). N6-biotinyllysine is present on lysine 1136.

In terms of assembly, homotetramer. Biotin serves as cofactor. Zn(2+) is required as a cofactor.

Its subcellular location is the cytoplasm. It carries out the reaction hydrogencarbonate + pyruvate + ATP = oxaloacetate + ADP + phosphate + H(+). The protein operates within carbohydrate biosynthesis; gluconeogenesis. Pyruvate carboxylase catalyzes a 2-step reaction, involving the ATP-dependent carboxylation of the covalently attached biotin in the first step and the transfer of the carboxyl group to pyruvate in the second. The chain is Pyruvate carboxylase 2 (PYC2) from Saccharomyces cerevisiae (strain ATCC 204508 / S288c) (Baker's yeast).